Reading from the N-terminus, the 428-residue chain is Serine--tRNA ligase (428 aa).

L-serine is bound at residue 233 to 235 (TAE). An ATP-binding site is contributed by 264–266 (RRE). E287 is an L-serine binding site. 351 to 354 (EVSS) is an ATP binding site. Residue S387 coordinates L-serine.

Belongs to the class-II aminoacyl-tRNA synthetase family. Type-1 seryl-tRNA synthetase subfamily. Homodimer. The tRNA molecule binds across the dimer.

It is found in the cytoplasm. The enzyme catalyses tRNA(Ser) + L-serine + ATP = L-seryl-tRNA(Ser) + AMP + diphosphate + H(+). The catalysed reaction is tRNA(Sec) + L-serine + ATP = L-seryl-tRNA(Sec) + AMP + diphosphate + H(+). The protein operates within aminoacyl-tRNA biosynthesis; selenocysteinyl-tRNA(Sec) biosynthesis; L-seryl-tRNA(Sec) from L-serine and tRNA(Sec): step 1/1. Functionally, catalyzes the attachment of serine to tRNA(Ser). Is also able to aminoacylate tRNA(Sec) with serine, to form the misacylated tRNA L-seryl-tRNA(Sec), which will be further converted into selenocysteinyl-tRNA(Sec). The protein is Serine--tRNA ligase of Salinibacter ruber (strain DSM 13855 / M31).